We begin with the raw amino-acid sequence, 425 residues long: Inositol hexakisphosphate kinase 2 (425 aa).

Residues 206-208 (ENL) and Asp219 each bind ATP. Substrate is bound by residues 215–223 (PCVLDLKMG), Lys221, and 235–242 (KAANQIRK). Asp382 contributes to the ATP binding site. Substrate is bound at residue His385.

This sequence belongs to the inositol phosphokinase (IPK) family. In terms of tissue distribution, detected in kidney, intestine, liver and heart.

It is found in the nucleus. It carries out the reaction 1D-myo-inositol hexakisphosphate + ATP = 5-diphospho-1D-myo-inositol 1,2,3,4,6-pentakisphosphate + ADP. It functions in the pathway phospholipid metabolism; phosphatidylinositol metabolism. In terms of biological role, converts inositol hexakisphosphate (InsP6) to diphosphoinositol pentakisphosphate (InsP7/PP-InsP5). The protein is Inositol hexakisphosphate kinase 2 (IP6K2) of Oryctolagus cuniculus (Rabbit).